The sequence spans 359 residues: Phospho-N-acetylmuramoyl-pentapeptide-transferase (359 aa).

10 helical membrane-spanning segments follow: residues 26-46, 73-93, 98-118, 134-154, 166-186, 197-217, 234-254, 261-281, 286-306, and 338-358; these read TIYGGLTAFLICFLLGPWVIN, TMGGILILFSLGVSTLLWADL, ILITLLSMLLFGAIGFIDDYL, FLVQIMAGLVISYLVYLCPDF, FTPDLGIWYIPFATLVIVGTS, GLAIGPIIIAGVTYMIFAYVA, CGEITIVCGILAGAGLGFLWF, VFMGDTGSIPLGAILGTIAVI, ILLLVVGGLFVIEALSVIIQV, and IVRFWIIAITLALISLSTLKI.

This sequence belongs to the glycosyltransferase 4 family. MraY subfamily. It depends on Mg(2+) as a cofactor.

The protein resides in the cell inner membrane. The enzyme catalyses UDP-N-acetyl-alpha-D-muramoyl-L-alanyl-gamma-D-glutamyl-meso-2,6-diaminopimeloyl-D-alanyl-D-alanine + di-trans,octa-cis-undecaprenyl phosphate = di-trans,octa-cis-undecaprenyl diphospho-N-acetyl-alpha-D-muramoyl-L-alanyl-D-glutamyl-meso-2,6-diaminopimeloyl-D-alanyl-D-alanine + UMP. It participates in cell wall biogenesis; peptidoglycan biosynthesis. Catalyzes the initial step of the lipid cycle reactions in the biosynthesis of the cell wall peptidoglycan: transfers peptidoglycan precursor phospho-MurNAc-pentapeptide from UDP-MurNAc-pentapeptide onto the lipid carrier undecaprenyl phosphate, yielding undecaprenyl-pyrophosphoryl-MurNAc-pentapeptide, known as lipid I. The sequence is that of Phospho-N-acetylmuramoyl-pentapeptide-transferase from Desulforapulum autotrophicum (strain ATCC 43914 / DSM 3382 / VKM B-1955 / HRM2) (Desulfobacterium autotrophicum).